Consider the following 628-residue polypeptide: Probable alpha-L-arabinofuranosidase A (628 aa).

A signal peptide spans 1-25 (MVAFSALSGVSALSLLLCLVQHAHG). Asn-36, Asn-51, Asn-74, Asn-152, Asn-171, Asn-260, Asn-359, and Asn-493 each carry an N-linked (GlcNAc...) asparagine glycan.

Belongs to the glycosyl hydrolase 51 family.

The protein resides in the secreted. It catalyses the reaction Hydrolysis of terminal non-reducing alpha-L-arabinofuranoside residues in alpha-L-arabinosides.. Its pathway is glycan metabolism; L-arabinan degradation. Alpha-L-arabinofuranosidase involved in the degradation of arabinoxylan, a major component of plant hemicellulose. Acts only on small linear 1,5-alpha-linked L-arabinofuranosyl oligosaccharides. This Aspergillus awamori (Black koji mold) protein is Probable alpha-L-arabinofuranosidase A (abfA).